Reading from the N-terminus, the 504-residue chain is Maturase K (504 aa).

It belongs to the intron maturase 2 family. MatK subfamily.

Its subcellular location is the plastid. The protein resides in the chloroplast. Usually encoded in the trnK tRNA gene intron. Probably assists in splicing its own and other chloroplast group II introns. This is Maturase K from Thlaspi arvense (Field penny-cress).